The sequence spans 366 residues: Prostaglandin F2-alpha receptor (366 aa).

The Extracellular segment spans residues 1 to 31 (MSINSSKQPASSAAGLIANTTCQTENRLSVF). N-linked (GlcNAc...) asparagine glycans are attached at residues Asn4 and Asn19. Residues 32 to 55 (FSIIFMTVGIVSNSLAIAILMKAY) traverse the membrane as a helical segment. Residues 56–69 (QRFRRKSKASFLLL) are Cytoplasmic-facing. The helical transmembrane segment at 70–90 (ASGLVITDFFGHLINGGIAVF) threads the bilayer. At 91 to 109 (VYASDKDWIRFDQSNILCS) the chain is on the extracellular side. A disulfide bond links Cys108 and Cys186. The chain crosses the membrane as a helical span at residues 110–131 (VFGISMVFSGLCPLFLGSTMAI). At 132–152 (ERCIGVTNPLFHSTKITSKHV) the chain is on the cytoplasmic side. The helical transmembrane segment at 153–175 (KMILSGVCMFAVFVALLPILGHR) threads the bilayer. The Extracellular segment spans residues 176–198 (DYQIQASRTWCFYNTEHIEDWED). The chain crosses the membrane as a helical span at residues 199–224 (RFYLLFFSSLGLLALGISFSCNAVTG). The Cytoplasmic segment spans residues 225-250 (VTLLRVKFRSQQHRQGRSHHLEMVIQ). A helical membrane pass occupies residues 251-267 (LLAIMCVSCVCWSPFLV). At 268-285 (TMANIAINGNNSPVTCET) the chain is on the extracellular side. Residues 286–307 (TLFALRMATWNQILDPWVYILL) traverse the membrane as a helical segment. Residues 308-366 (RKAVLRNLYKLASRCCGVNIISLHIWELSSIKNSLKVAAISESPAAEKENQQASSEAGL) lie on the Cytoplasmic side of the membrane.

It belongs to the G-protein coupled receptor 1 family. Highest expression in pregnant ovary. Also found in a low extent in the kidney. In the brain, expressed in astrocytes and oligodendrocytes, and meningeal fibroblasts, but not in migroglia cells.

The protein localises to the cell membrane. In terms of biological role, receptor for prostaglandin F2-alpha (PGF2-alpha). The activity of this receptor is mediated by G proteins which activate a phosphatidylinositol-calcium second messenger system. Initiates luteolysis in the corpus luteum. The polypeptide is Prostaglandin F2-alpha receptor (Ptgfr) (Rattus norvegicus (Rat)).